The sequence spans 270 residues: Regulatory protein RecX (270 aa).

This sequence belongs to the RecX family.

Its subcellular location is the cytoplasm. Its function is as follows. Modulates RecA activity. This Bacillus cytotoxicus (strain DSM 22905 / CIP 110041 / 391-98 / NVH 391-98) protein is Regulatory protein RecX.